A 1042-amino-acid chain; its full sequence is MEQDTAAVAATVAAADATATIVVIEDEQPGPSTSQEEGAAAAATEATAATEKGEKKKEKNVSSFQLKLAAKAPKSEKEMDPEYEEKMKADRAKRFEFLLKQTELFAHFIQPSAQKSPTSPLNMKLGRPRIKKDEKQSLISAGDYRHRRTEQEEDEELLSESRKTSNVCIRFEVSPSYVKGGPLRDYQIRGLNWLISLYENGVNGILADEMGLGKTLQTIALLGYLKHYRNIPGPHMVLVPKSTLHNWMNEFKRWVPSLRVICFVGDKDARAAFIRDEMMPGEWDVCVTSYEMVIKEKSVFKKFHWRYLVIDEAHRIKNEKSKLSEIVREFKSTNRLLLTGTPLQNNLHELWALLNFLLPDVFNSADDFDSWFDTKNCLGDQKLVERLHAVLKPFLLRRIKTDVEKSLPPKKEIKIYLGLSKMQREWYTKILMKDIDVLNSSGKMDKMRLLNILMQLRKCCNHPYLFDGAEPGPPYTTDEHIVSNSGKMVVLDKLLAKLKEQGSRVLIFSQMTRLLDILEDYCMWRGYEYCRLDGQTPHEEREEAIEAFNAPNSSKFIFMLSTRAGGLGINLASADVVILYDSDWNPQVDLQAMDRAHRIGQKKPVRVFRLITDNTVEERIVERAEIKLRLDSIVIQQGRLIDQQSNKLAKEEMLQMIRHGATHVFASKESELTDEDITTILERGEKKTAEMNERLQKMGESSLRNFRMDIEQSLYKFEGEDYREKQKLGMVEWIEPPKRERKANYAVDAYFREALRVSEPKIPKAPRPPKQPNVQDFQFFPPRLFELLEKEILYYRKTIGYKVPRNPDIPNPALAQREEQKKIDGAEPLTPEETEEKEKLLTQGFTNWTKRDFNQFIKANEKYGRDDIDNIAREVEGKSPEEVMEYSAVFWERCNELQDIEKIMAQIERGEARIQRRISIKKALDAKIARYKAPFHQLRIQYGTSKGKNYTEEEDRFLICMLHKMGFDRENVYEELRQCVRNAPQFRFDWFIKSRTAMEFQRRCNTLISLIEKENMEIEERERAEKKKRATKTPMVKFSAFS.

The tract at residues 25-82 is disordered; sequence EDEQPGPSTSQEEGAAAAATEATAATEKGEKKKEKNVSSFQLKLAAKAPKSEKEMDPE. Low complexity predominate over residues 36-50; the sequence is EEGAAAAATEATAAT. 2 stretches are compositionally biased toward basic and acidic residues: residues 51 to 60 and 73 to 82; these read EKGEKKKEKN and PKSEKEMDPE. Residues S116 and S119 each carry the phosphoserine modification. Residues 195 to 360 enclose the Helicase ATP-binding domain; the sequence is ISLYENGVNG…WALLNFLLPD (166 aa). 208 to 215 is an ATP binding site; that stretch reads DEMGLGKT. A DEAH box motif is present at residues 311–314; it reads DEAH. The region spanning 490–641 is the Helicase C-terminal domain; sequence VLDKLLAKLK…SIVIQQGRLI (152 aa). Glycyl lysine isopeptide (Lys-Gly) (interchain with G-Cter in SUMO2) cross-links involve residues K650, K716, and K738. Positions 819 to 849 are disordered; it reads EQKKIDGAEPLTPEETEEKEKLLTQGFTNWT. Basic and acidic residues predominate over residues 828 to 837; that stretch reads PLTPEETEEK. The SANT 1 domain occupies 843–895; that stretch reads QGFTNWTKRDFNQFIKANEKYGRDDIDNIAREVEGKSPEEVMEYSAVFWERCN. Residue Y942 is modified to Phosphotyrosine. The SANT 2 domain maps to 946-1010; it reads KGKNYTEEED…QRRCNTLISL (65 aa).

The protein belongs to the SNF2/RAD54 helicase family. ISWI subfamily. In terms of assembly, may form homodimers. Component of the ACF-1 ISWI chromatin remodeling complex at least composed of SMARCA1 and BAZ1A, which regulates the spacing of histone octamers on the DNA template to facilitate access to DNA. Within the complex interacts with BAZ1A; the interaction is direct. Component of the WICH-1 ISWI chromatin remodeling complex at least composed of SMARCA1 and BAZ1B/WSTF. Within the complex interacts with BAZ1B/WSTF. Component of the NoRC-1 ISWI chromatin remodeling complex at least composed of SMARCA1 and BAZ2A/TIP5. Within the complex interacts with BAZ2A/TIP5. Component of the BRF-1 ISWI chromatin remodeling complex at least composed of SMARCA1 and BAZ2B. Within the complex interacts with BAZ2B. Component of the NURF-1 ISWI chromatin remodeling complex (also called the nucleosome-remodeling factor (NURF) complex) at least composed of SMARCA1, BPTF, RBBP4 and RBBP7. Within the complex interacts with BPTF. Within the complex interacts with RBBP4 and RBBP7. Component of the CERF-1 ISWI chromatin remodeling complex (also called the CECR2-containing-remodeling factor (CERF) complex) at least composed of CECR2 and SMARCA1. LUZP1 is detected as part of the CERF-1 complex in embryonic stem cells where it is involved in complex stabilization but is not detected in the complex in the testis. Component of the RSF-1 ISWI chromatin remodeling complex at least composed of SMARCA1 and RSF1. Within the complex interacts with RSF1. Interacts with PRLR. Interacts with ERCC6. As to quaternary structure, may form homodimers. Component of the BPFT-SMARCA1 complex at least composed of SMARCA1, BPFT, RBBP4 and RBBP7; the complex is catalytically inactive and does not remodel chromatin. Within the complex interacts with BPTF, RBBP4 and RBBP7. Component of the BAZ1A-1-SMARCA1 complex at least composed of SMARCA1 and BAZ1A; the complex is catalytically inactive and does not remodel chromatin. Component of the BAZ1B-1-SMARCA1 complex at least composed of SMARCA1 and BAZ1B; the complex is catalytically inactive and does not remodel chromatin. In terms of tissue distribution, expressed in lung, breast, kidney, ovary, skeletal muscle and brain. As to expression, mainly expressed in non-neuronal tissues such as lung, breast, kidney, and ovary.

It localises to the nucleus. It is found in the chromosome. The enzyme catalyses ATP + H2O = ADP + phosphate + H(+). In terms of biological role, ATPase that possesses intrinsic ATP-dependent chromatin-remodeling activity. ATPase activity is substrate-dependent, and is increased when nucleosomes are the substrate, but is also catalytically active when DNA alone is the substrate. Catalytic subunit of ISWI chromatin-remodeling complexes, which form ordered nucleosome arrays on chromatin and facilitate access to DNA during DNA-templated processes such as DNA replication, transcription, and repair. Within the ISWI chromatin-remodeling complexes, slides edge- and center-positioned histone octamers away from their original location on the DNA template. Catalytic activity and histone octamer sliding propensity is regulated and determined by components of the ISWI chromatin-remodeling complexes. The BAZ1A-, BAZ1B-, BAZ2A- and BAZ2B-containing ISWI chromatin-remodeling complexes regulate the spacing of nucleosomes along the chromatin and have the ability to slide mononucleosomes to the center of a DNA template. The CECR2- and RSF1-containing ISWI chromatin-remodeling complexes do not have the ability to slide mononucleosomes to the center of a DNA template. Within the NURF-1 and CERF-1 ISWI chromatin remodeling complexes, nucleosomes are the preferred substrate for its ATPase activity. Within the NURF-1 ISWI chromatin-remodeling complex, binds to the promoters of En1 and En2 to positively regulate their expression and promote brain development. May promote neurite outgrowth. May be involved in the development of luteal cells. Facilitates nucleosome assembly during DNA replication, ensuring replication fork progression and genomic stability by preventing replication stress and nascent DNA gaps. Its function is as follows. Catalytically inactive when either DNA or nucleosomes are the substrate and does not possess chromatin-remodeling activity. Acts as a negative regulator of chromatin remodelers by generating inactive complexes. This chain is SWI/SNF-related matrix-associated actin-dependent regulator of chromatin subfamily A member 1, found in Homo sapiens (Human).